Consider the following 429-residue polypeptide: Histidine--tRNA ligase (429 aa).

Belongs to the class-II aminoacyl-tRNA synthetase family. In terms of assembly, homodimer.

The protein resides in the cytoplasm. It carries out the reaction tRNA(His) + L-histidine + ATP = L-histidyl-tRNA(His) + AMP + diphosphate + H(+). In Streptococcus pneumoniae (strain CGSP14), this protein is Histidine--tRNA ligase.